The chain runs to 94 residues: Pyrimidine/purine nucleoside phosphorylase (94 aa).

It belongs to the nucleoside phosphorylase PpnP family.

The catalysed reaction is a purine D-ribonucleoside + phosphate = a purine nucleobase + alpha-D-ribose 1-phosphate. It catalyses the reaction adenosine + phosphate = alpha-D-ribose 1-phosphate + adenine. It carries out the reaction cytidine + phosphate = cytosine + alpha-D-ribose 1-phosphate. The enzyme catalyses guanosine + phosphate = alpha-D-ribose 1-phosphate + guanine. The catalysed reaction is inosine + phosphate = alpha-D-ribose 1-phosphate + hypoxanthine. It catalyses the reaction thymidine + phosphate = 2-deoxy-alpha-D-ribose 1-phosphate + thymine. It carries out the reaction uridine + phosphate = alpha-D-ribose 1-phosphate + uracil. The enzyme catalyses xanthosine + phosphate = alpha-D-ribose 1-phosphate + xanthine. Functionally, catalyzes the phosphorolysis of diverse nucleosides, yielding D-ribose 1-phosphate and the respective free bases. Can use uridine, adenosine, guanosine, cytidine, thymidine, inosine and xanthosine as substrates. Also catalyzes the reverse reactions. The protein is Pyrimidine/purine nucleoside phosphorylase of Escherichia coli (strain ATCC 8739 / DSM 1576 / NBRC 3972 / NCIMB 8545 / WDCM 00012 / Crooks).